The chain runs to 96 residues: MYKDVDSHQRDSRSDGHQDGFKKNPNFRFFKKKTCKFCDMDRVPDYKEFDFLKKFITEQGKILPRRITGTSAKHQRRLALEIKKARYMALLPFVKQ.

Residues 1–22 (MYKDVDSHQRDSRSDGHQDGFK) are compositionally biased toward basic and acidic residues. The tract at residues 1 to 25 (MYKDVDSHQRDSRSDGHQDGFKKNP) is disordered.

It belongs to the bacterial ribosomal protein bS18 family. As to quaternary structure, part of the 30S ribosomal subunit. Forms a tight heterodimer with protein bS6.

Functionally, binds as a heterodimer with protein bS6 to the central domain of the 16S rRNA, where it helps stabilize the platform of the 30S subunit. The sequence is that of Small ribosomal subunit protein bS18 from Borrelia hermsii (strain HS1 / DAH).